We begin with the raw amino-acid sequence, 266 residues long: Ras-like protein family member 12 (266 aa).

Residues 27–34, 74–78, and 134–137 each bind GTP; these read GRRGAGKS, DTADL, and NKLD.

Belongs to the small GTPase superfamily. Ras family.

The enzyme catalyses GTP + H2O = GDP + phosphate + H(+). The polypeptide is Ras-like protein family member 12 (RASL12) (Bos taurus (Bovine)).